Here is a 187-residue protein sequence, read N- to C-terminus: Inner membrane-spanning protein YciB (187 aa).

Transmembrane regions (helical) follow at residues 25 to 45, 50 to 70, 76 to 96, 118 to 138, and 148 to 168; these read ATGA…ALYK, MQLI…FLHD, WKVT…HVMG, INWA…YVAY, and FKVF…GGYI.

The protein belongs to the YciB family.

It localises to the cell inner membrane. Its function is as follows. Plays a role in cell envelope biogenesis, maintenance of cell envelope integrity and membrane homeostasis. In Vibrio vulnificus (strain CMCP6), this protein is Inner membrane-spanning protein YciB.